The following is a 327-amino-acid chain: Undecaprenyl-phosphate 4-deoxy-4-formamido-L-arabinose transferase (327 aa).

Topologically, residues 1–235 are cytoplasmic; the sequence is MFDAAPIKKV…TCLTTTPLRL (235 aa). A helical transmembrane segment spans residues 236-256; it reads LSLLGSVIAIGGFSLSVLLIV. Topologically, residues 257 to 269 are periplasmic; sequence LRLALGPQWAAEG. The chain crosses the membrane as a helical span at residues 270–290; sequence VFMLFAVLFTFIGAQFIGMGL. The Cytoplasmic segment spans residues 291–327; sequence LGEYIGRIYNDVRARPRYFVQQVIYPESTPFTEESHQ.

The protein belongs to the glycosyltransferase 2 family.

The protein resides in the cell inner membrane. It catalyses the reaction UDP-4-deoxy-4-formamido-beta-L-arabinose + di-trans,octa-cis-undecaprenyl phosphate = 4-deoxy-4-formamido-alpha-L-arabinopyranosyl di-trans,octa-cis-undecaprenyl phosphate + UDP. Its pathway is glycolipid biosynthesis; 4-amino-4-deoxy-alpha-L-arabinose undecaprenyl phosphate biosynthesis; 4-amino-4-deoxy-alpha-L-arabinose undecaprenyl phosphate from UDP-4-deoxy-4-formamido-beta-L-arabinose and undecaprenyl phosphate: step 1/2. The protein operates within bacterial outer membrane biogenesis; lipopolysaccharide biosynthesis. Functionally, catalyzes the transfer of 4-deoxy-4-formamido-L-arabinose from UDP to undecaprenyl phosphate. The modified arabinose is attached to lipid A and is required for resistance to polymyxin and cationic antimicrobial peptides. The chain is Undecaprenyl-phosphate 4-deoxy-4-formamido-L-arabinose transferase from Salmonella agona (strain SL483).